The sequence spans 170 residues: NADH-dependent flavin reductase StyB (170 aa).

Belongs to the non-flavoprotein flavin reductase family. In terms of assembly, homodimer.

It carries out the reaction a reduced flavin + NAD(+) = an oxidized flavin + NADH + 2 H(+). The protein operates within aromatic compound metabolism. In terms of biological role, reductase component of a two-component system that catalyzes the first step in the aerobic styrene degradation pathway by enantioselective epoxidation of the vinyl side chain. Utilizes NADH to reduce FAD, which is then transferred to the styrene monooxygenase StyA. This chain is NADH-dependent flavin reductase StyB (styB), found in Pseudomonas fluorescens.